The following is a 131-amino-acid chain: MAGIKALISLSFGGAIGLMFLMLGCALPIYNKYWPLFVLFFYILSPIPYCIARRLVDDTDAMSNACKELAIFLTTGIVVSAFGLPIVFARAHLIEWGACALVLTGNTVIFATILGFFLVFGSNDDFSWQQW.

4 consecutive transmembrane segments (helical) span residues 7–27 (LISL…GCAL), 32–52 (KYWP…YCIA), 69–89 (LAIF…IVFA), and 100–120 (ALVL…FLVF).

It belongs to the OB-RGRP/VPS55 family. Interacts with RAB13. In terms of tissue distribution, widely expressed, with highest expression in heart, testis, adrenal gland, thymus, and spleen, and lowest expression in lung and skeletal muscle.

The protein localises to the membrane. Negatively regulates growth hormone (GH) receptor cell surface expression in liver. May play a role in liver resistance to GH during periods of reduced nutrient availability. The protein is Leptin receptor overlapping transcript-like 1 (LEPROTL1) of Homo sapiens (Human).